Reading from the N-terminus, the 231-residue chain is 2,3-bisphosphoglycerate-dependent phosphoglycerate mutase (231 aa).

Residues 10–17 (RHGQSEWN), 23–24 (TG), R62, 89–92 (ERHY), K100, 116–117 (RR), and 185–186 (GN) contribute to the substrate site. H11 functions as the Tele-phosphohistidine intermediate in the catalytic mechanism. E89 functions as the Proton donor/acceptor in the catalytic mechanism.

The protein belongs to the phosphoglycerate mutase family. BPG-dependent PGAM subfamily. As to quaternary structure, homodimer.

The enzyme catalyses (2R)-2-phosphoglycerate = (2R)-3-phosphoglycerate. It functions in the pathway carbohydrate degradation; glycolysis; pyruvate from D-glyceraldehyde 3-phosphate: step 3/5. Catalyzes the interconversion of 2-phosphoglycerate and 3-phosphoglycerate. The sequence is that of 2,3-bisphosphoglycerate-dependent phosphoglycerate mutase from Buchnera aphidicola subsp. Acyrthosiphon pisum (strain APS) (Acyrthosiphon pisum symbiotic bacterium).